The following is a 538-amino-acid chain: Cytochrome c-552 (538 aa).

A signal peptide spans Met1–Ala55. Residue His133 coordinates heme c. Heme contacts are provided by Cys161, Cys164, and Lys165. Heme c contacts are provided by Cys199, Cys202, His203, Cys264, Cys267, and His268. Ca(2+) is bound by residues Glu270, Tyr271, Lys316, and Gln318. Tyr271 provides a ligand contact to substrate. His319 is a binding site for substrate. Heme c-binding residues include His330, Cys337, Cys340, His341, His356, Cys369, Cys372, His373, and His448.

This sequence belongs to the cytochrome c-552 family. Ca(2+) serves as cofactor. The cofactor is heme c.

It is found in the periplasm. It carries out the reaction 6 Fe(III)-[cytochrome c] + NH4(+) + 2 H2O = 6 Fe(II)-[cytochrome c] + nitrite + 8 H(+). It functions in the pathway nitrogen metabolism; nitrate reduction (assimilation). In terms of biological role, catalyzes the reduction of nitrite to ammonia, consuming six electrons in the process. In Haemophilus influenzae (strain 86-028NP), this protein is Cytochrome c-552.